We begin with the raw amino-acid sequence, 463 residues long: Fumarate hydratase class II (463 aa).

Substrate is bound by residues 95-97 (SGT), 126-129 (HPND), 136-138 (SSN), and threonine 184. Histidine 185 (proton donor/acceptor) is an active-site residue. Serine 315 is a catalytic residue. Substrate contacts are provided by residues serine 316 and 321 to 323 (KIN).

The protein belongs to the class-II fumarase/aspartase family. Fumarase subfamily. In terms of assembly, homotetramer.

Its subcellular location is the cytoplasm. It carries out the reaction (S)-malate = fumarate + H2O. It functions in the pathway carbohydrate metabolism; tricarboxylic acid cycle; (S)-malate from fumarate: step 1/1. Functionally, involved in the TCA cycle. Catalyzes the stereospecific interconversion of fumarate to L-malate. The polypeptide is Fumarate hydratase class II (Chlamydia muridarum (strain MoPn / Nigg)).